A 143-amino-acid polypeptide reads, in one-letter code: Peptide methionine sulfoxide reductase B8 (143 aa).

A MsrB domain is found at 18–139 (DEEWRAVLSP…NSVSLKFASA (122 aa)). Zn(2+) contacts are provided by Cys-57, Cys-60, Cys-103, and Cys-106. Cys-75 and Cys-128 are oxidised to a cystine. Catalysis depends on Cys-128, which acts as the Nucleophile.

It belongs to the MsrB Met sulfoxide reductase family. It depends on Zn(2+) as a cofactor.

The protein resides in the cytoplasm. It localises to the cytosol. It catalyses the reaction L-methionyl-[protein] + [thioredoxin]-disulfide + H2O = L-methionyl-(R)-S-oxide-[protein] + [thioredoxin]-dithiol. Its function is as follows. Catalyzes the reduction of methionine sulfoxide (MetSO) to methionine in proteins. Plays a protective role against oxidative stress by restoring activity to proteins that have been inactivated by methionine oxidation. MSRB family specifically reduces the MetSO R-enantiomer. This chain is Peptide methionine sulfoxide reductase B8 (MSRB8), found in Arabidopsis thaliana (Mouse-ear cress).